We begin with the raw amino-acid sequence, 498 residues long: ATP synthase subunit beta, chloroplastic (498 aa).

172–179 (GGAGVGKT) contacts ATP.

This sequence belongs to the ATPase alpha/beta chains family. F-type ATPases have 2 components, CF(1) - the catalytic core - and CF(0) - the membrane proton channel. CF(1) has five subunits: alpha(3), beta(3), gamma(1), delta(1), epsilon(1). CF(0) has four main subunits: a(1), b(1), b'(1) and c(9-12).

Its subcellular location is the plastid. The protein resides in the chloroplast thylakoid membrane. It carries out the reaction ATP + H2O + 4 H(+)(in) = ADP + phosphate + 5 H(+)(out). In terms of biological role, produces ATP from ADP in the presence of a proton gradient across the membrane. The catalytic sites are hosted primarily by the beta subunits. The polypeptide is ATP synthase subunit beta, chloroplastic (Phaseolus vulgaris (Kidney bean)).